A 148-amino-acid polypeptide reads, in one-letter code: Hydrogenase expression/formation protein HoxO (148 aa).

The disordered stretch occupies residues Ile128–Ser148. Over residues Glu134 to Ser148 the composition is skewed to polar residues.

This sequence belongs to the HupG/HyaE family.

This Azotobacter vinelandii protein is Hydrogenase expression/formation protein HoxO (hoxO).